The chain runs to 259 residues: MASTGETLTSQEYIAHHLHHLQVGSGFWTVNIDSMVFSVVLGTLFIWLFRRVAVKATSGVPGKLQCFVEIVFGFVDDTVKGIFHGKNKLIAPLALTIFVWIFLMNAMDLLPIDYLPHLAQISNIPYLRVVPSADVNITLSMALGVFFLILFYSIKIKGIGGFVKELTMTPFNHWAFVPINLLLETVTLISKPISLGLRLFGNMYAGEMIFILIAAMLPWWSQWFLNVPWAIFHILIITLQAFIFMVLTIVYLSMACEEH.

The next 5 helical transmembrane spans lie at 29 to 49 (TVNI…IWLF), 89 to 109 (LIAP…AMDL), 132 to 154 (SADV…FYSI), 209 to 229 (IFIL…NVPW), and 230 to 250 (AIFH…LTIV).

It belongs to the ATPase A chain family. As to quaternary structure, F-type ATPases have 2 components, CF(1) - the catalytic core - and CF(0) - the membrane proton channel. CF(1) has five subunits: alpha(3), beta(3), gamma(1), delta(1), epsilon(1). CF(0) has three main subunits: a(1), b(2) and c(9-12). The alpha and beta chains form an alternating ring which encloses part of the gamma chain. CF(1) is attached to CF(0) by a central stalk formed by the gamma and epsilon chains, while a peripheral stalk is formed by the delta and b chains.

It is found in the cell inner membrane. In terms of biological role, key component of the proton channel; it plays a direct role in the translocation of protons across the membrane. In Tolumonas auensis (strain DSM 9187 / NBRC 110442 / TA 4), this protein is ATP synthase subunit a.